Consider the following 334-residue polypeptide: GTP 3',8-cyclase (334 aa).

The Radical SAM core domain occupies 8-244; it reads RYGRPLRDLR…GEVAQRHAFA (237 aa). Arg17 lines the GTP pocket. Positions 24 and 28 each coordinate [4Fe-4S] cluster. Tyr30 contacts S-adenosyl-L-methionine. Position 31 (Cys31) interacts with [4Fe-4S] cluster. Arg70 contacts GTP. Gly74 is an S-adenosyl-L-methionine binding site. Residue Thr101 coordinates GTP. Ser125 is an S-adenosyl-L-methionine binding site. A GTP-binding site is contributed by Lys163. An S-adenosyl-L-methionine-binding site is contributed by Met197. Residues Cys261 and Cys264 each coordinate [4Fe-4S] cluster. 266 to 268 is a binding site for GTP; sequence RAR. Cys278 contributes to the [4Fe-4S] cluster binding site.

This sequence belongs to the radical SAM superfamily. MoaA family. Monomer and homodimer. [4Fe-4S] cluster is required as a cofactor.

The catalysed reaction is GTP + AH2 + S-adenosyl-L-methionine = (8S)-3',8-cyclo-7,8-dihydroguanosine 5'-triphosphate + 5'-deoxyadenosine + L-methionine + A + H(+). The protein operates within cofactor biosynthesis; molybdopterin biosynthesis. Its function is as follows. Catalyzes the cyclization of GTP to (8S)-3',8-cyclo-7,8-dihydroguanosine 5'-triphosphate. The chain is GTP 3',8-cyclase from Xanthomonas axonopodis pv. citri (strain 306).